The following is a 783-amino-acid chain: Probable phosphoketolase (783 aa).

It belongs to the XFP family. It depends on thiamine diphosphate as a cofactor.

This is Probable phosphoketolase from Rhodopseudomonas palustris (strain ATCC BAA-98 / CGA009).